The following is a 394-amino-acid chain: Elongation factor Tu 2 (394 aa).

A tr-type G domain is found at 10–204; that stretch reads KPHVNVGTIG…ALDSYIPEPE (195 aa). The tract at residues 19–26 is G1; it reads GHVDHGKT. 19-26 lines the GTP pocket; that stretch reads GHVDHGKT. Thr26 is a binding site for Mg(2+). The interval 60–64 is G2; the sequence is GITIN. Residues 81–84 form a G3 region; the sequence is DCPG. GTP is bound by residues 81 to 85 and 136 to 139; these read DCPGH and NKCD. The tract at residues 136-139 is G4; that stretch reads NKCD. The G5 stretch occupies residues 174 to 176; sequence SAL.

Belongs to the TRAFAC class translation factor GTPase superfamily. Classic translation factor GTPase family. EF-Tu/EF-1A subfamily. Monomer.

It is found in the cytoplasm. It catalyses the reaction GTP + H2O = GDP + phosphate + H(+). In terms of biological role, GTP hydrolase that promotes the GTP-dependent binding of aminoacyl-tRNA to the A-site of ribosomes during protein biosynthesis. This Shewanella loihica (strain ATCC BAA-1088 / PV-4) protein is Elongation factor Tu 2.